Reading from the N-terminus, the 703-residue chain is Cyclomaltodextrin glucanotransferase (703 aa).

The first 29 residues, 1–29, serve as a signal peptide directing secretion; sequence MNDLNDFLKTILLSFIFFLLLSLPTVAEA. An A1 region spans residues 30 to 160; sequence DVTNKVNYSK…GIKVIMDFTP (131 aa). Ca(2+) is bound by residues Asp-52, Asn-54, Asn-57, and Asn-58. A disulfide bridge links Cys-68 with Cys-75. Ca(2+) is bound by residues Gly-76 and Asp-78. 122–123 is a substrate binding site; the sequence is YW. Asn-161 lines the Ca(2+) pocket. The b stretch occupies residues 161 to 224; sequence NHSSPALETN…NLYDLADYDL (64 aa). His-162 lines the substrate pocket. A Ca(2+)-binding site is contributed by Ile-212. 215 to 218 is a binding site for substrate; sequence NLYD. Asp-221 contributes to the Ca(2+) binding site. The interval 225–428 is A2; that stretch reads NNTVMDQYLK…LRQTNSALGY (204 aa). Residue Arg-249 participates in substrate binding. The active-site Nucleophile is Asp-251. 254–255 contacts substrate; that stretch reads KH. Residue His-255 participates in Ca(2+) binding. Glu-279 functions as the Proton donor in the catalytic mechanism. Substrate is bound by residues His-349, Asp-393, and Arg-397. Positions 429 to 516 are c; it reads GTTTERWLNE…SVAVWQVSNP (88 aa). A d region spans residues 517–600; that stretch reads STSPLIGQVG…SPTYKEFEVL (84 aa). An IPT/TIG domain is found at 520–598; the sequence is PLIGQVGPMM…IKSPTYKEFE (79 aa). One can recognise a CBM20 domain in the interval 599 to 703; that stretch reads VLSGNQVSVR…TGTDTVMINW (105 aa). The e stretch occupies residues 601 to 703; it reads SGNQVSVRFG…TGTDTVMINW (103 aa).

It belongs to the glycosyl hydrolase 13 family. Monomer. It depends on Ca(2+) as a cofactor.

It localises to the secreted. It catalyses the reaction Cyclizes part of a (1-&gt;4)-alpha-D-glucan chain by formation of a (1-&gt;4)-alpha-D-glucosidic bond.. The protein is Cyclomaltodextrin glucanotransferase (cgt) of Bacillus sp. (strain 1-1).